The following is a 194-amino-acid chain: Orotate phosphoribosyltransferase (194 aa).

116–124 (EDIVTTGLS) is a 5-phospho-alpha-D-ribose 1-diphosphate binding site. Orotate contacts are provided by Thr120 and Arg148.

The protein belongs to the purine/pyrimidine phosphoribosyltransferase family. PyrE subfamily. As to quaternary structure, homodimer. It depends on Mg(2+) as a cofactor.

It carries out the reaction orotidine 5'-phosphate + diphosphate = orotate + 5-phospho-alpha-D-ribose 1-diphosphate. It functions in the pathway pyrimidine metabolism; UMP biosynthesis via de novo pathway; UMP from orotate: step 1/2. Functionally, catalyzes the transfer of a ribosyl phosphate group from 5-phosphoribose 1-diphosphate to orotate, leading to the formation of orotidine monophosphate (OMP). This chain is Orotate phosphoribosyltransferase, found in Caulobacter vibrioides (strain ATCC 19089 / CIP 103742 / CB 15) (Caulobacter crescentus).